A 588-amino-acid polypeptide reads, in one-letter code: Cyclomaltodextrinase (588 aa).

The substrate site is built by His247 and Arg326. Residue Asp328 is the Nucleophile of the active site. Glu357 acts as the Proton donor in catalysis. Substrate is bound by residues 423-424 (HD), Asp468, and Arg472.

Belongs to the glycosyl hydrolase 13 family. As to quaternary structure, exists as a monomer or a homodimer in solution. Homodimer is more active and stable than the monomer.

The catalysed reaction is cyclomaltodextrin + H2O = linear maltodextrin. Its activity is regulated as follows. No metal dependence, but Mn(2+) increases the activity with alpha-cyclodextrin as substrate. No effect on the activity with presence or absence of Ca(2+), Zn(2+), Tween-20 or EDTA. Hydrolyzes alpha-, beta- and gamma-cyclodextrins with the highest activity with alpha-cyclodextrin (cyclomaltohexaose). Pullulan is the preferred substrate from linear substrates. Maltose is a major product of these reactions. Is also able to hydrolyze maltotriose and acarbose, and transglycosylate their hydrolytic products. Major reaction products of maltotriose and of acarbose are maltose and glucose, and glucose and pseudotrisaccharide, respectively. No activity with glucose or maltose as substrate. This is Cyclomaltodextrinase from Geobacillus thermopakistaniensis (strain MAS1).